The primary structure comprises 299 residues: Glutamate formimidoyltransferase (299 aa).

H82 serves as the catalytic For formimidoyltransferase activity. 163–172 provides a ligand contact to folate; sequence GDRKIHPTAG.

Belongs to the formiminotransferase family.

It localises to the cytoplasm. The enzyme catalyses (6S)-5-formyl-5,6,7,8-tetrahydrofolate + L-glutamate = N-formyl-L-glutamate + (6S)-5,6,7,8-tetrahydrofolate + H(+). The catalysed reaction is 5-formimidoyltetrahydrofolate + L-glutamate = N-formimidoyl-L-glutamate + (6S)-5,6,7,8-tetrahydrofolate. It carries out the reaction (6S)-5-formyl-5,6,7,8-tetrahydrofolate + ATP = (6R)-5,10-methenyltetrahydrofolate + ADP + phosphate. The protein operates within amino-acid degradation; L-histidine degradation into L-glutamate; L-glutamate from N-formimidoyl-L-glutamate (transferase route): step 1/1. It participates in one-carbon metabolism; tetrahydrofolate interconversion. In terms of biological role, catalyzes the transfer of the formyl group from N-formylglutamate to tetrahydrofolate (THF) to yield 5-formyltetrahydrofolate (5-CHO-THF) and glutamate (Glu). The triglutamate form of 5-CHO-THF (5-CHO-THF-Glu3) can also be used as substrate. It can also catalyze the transfer of the formimino group from N-formiminoglutamate to tetrahydrofolate (THF) to yield 5-formiminotetrahydrofolate (5-NH=CH-THF) and glutamate (Glu). It can replace YgfA to catalyze the irreversible ATP-dependent transformation of 5-CHO-THF to form 5,10-methenyltetrahydrofolate (5,10-CH=THF). This Streptococcus pyogenes serotype M1 protein is Glutamate formimidoyltransferase.